The following is a 141-amino-acid chain: Nucleoside diphosphate kinase (141 aa).

ATP contacts are provided by Lys-11, Phe-59, Arg-87, Thr-93, Arg-104, and Asn-114. Catalysis depends on His-117, which acts as the Pros-phosphohistidine intermediate.

This sequence belongs to the NDK family. In terms of assembly, homotetramer. Requires Mg(2+) as cofactor.

It localises to the cytoplasm. The enzyme catalyses a 2'-deoxyribonucleoside 5'-diphosphate + ATP = a 2'-deoxyribonucleoside 5'-triphosphate + ADP. The catalysed reaction is a ribonucleoside 5'-diphosphate + ATP = a ribonucleoside 5'-triphosphate + ADP. Functionally, major role in the synthesis of nucleoside triphosphates other than ATP. The ATP gamma phosphate is transferred to the NDP beta phosphate via a ping-pong mechanism, using a phosphorylated active-site intermediate. This is Nucleoside diphosphate kinase from Neisseria gonorrhoeae (strain NCCP11945).